Reading from the N-terminus, the 342-residue chain is MSAWASQEAAKEEEAVGDFARMLERRDAGLLARVLSRAQTGPEAYVRGLWRAEVGLERWRLTRVLGCGSVACVFELGDGALALKVPTSRRKAPVLLHEVLIYSHLAQQAGGRLAERHVVPFHGVAAVTRREYRRLRGGEVVPALVLERMDTTLEAVHRRAAVSKGQWWRYARDLVAALQFLRESCVVHGDIKTANVLVRGQDAFLADFTSAAVCDAAPEPLTTTLEYCAPGLIGGGQPTHSTDVYAAGLCLLALITRFEPFRELSMMKSHSSAPTHSLHETQWLMNAISKGDPIKYNVLSQDLYDRWAEELHFLRRFFVPAAQDALSRWLAESNARVAEHAF.

A Protein kinase domain is found at 59 to 342 (WRLTRVLGCG…SNARVAEHAF (284 aa)). Residues 65–73 (LGCGSVACV) and Lys-84 each bind ATP. Asp-190 acts as the Proton acceptor in catalysis.

The protein belongs to the protein kinase superfamily. Ser/Thr protein kinase family.

The enzyme catalyses L-seryl-[protein] + ATP = O-phospho-L-seryl-[protein] + ADP + H(+). The catalysed reaction is L-threonyl-[protein] + ATP = O-phospho-L-threonyl-[protein] + ADP + H(+). Probable serine/threonine protein kinase which may function redundantly with MPK1-independent branch of the PCK1 pathway. The sequence is that of Serine/threonine-protein kinase ISR1 (ISR1) from Eremothecium gossypii (strain ATCC 10895 / CBS 109.51 / FGSC 9923 / NRRL Y-1056) (Yeast).